A 264-amino-acid polypeptide reads, in one-letter code: Proteasome subunit alpha type-4 (264 aa).

It belongs to the peptidase T1A family. As to quaternary structure, the 26S proteasome consists of a 20S proteasome core and two 19S regulatory subunits. The 20S proteasome core is composed of 28 subunits that are arranged in four stacked rings, resulting in a barrel-shaped structure. The two end rings are each formed by seven alpha subunits, and the two central rings are each formed by seven beta subunits. The catalytic chamber with the active sites is on the inside of the barrel. Interacts with PI31.

The protein resides in the cytoplasm. Its subcellular location is the nucleus. The proteasome is a multicatalytic proteinase complex which is characterized by its ability to cleave peptides with Arg, Phe, Tyr, Leu, and Glu adjacent to the leaving group at neutral or slightly basic pH. The proteasome has an ATP-dependent proteolytic activity. This Drosophila melanogaster (Fruit fly) protein is Proteasome subunit alpha type-4 (Prosalpha3).